The chain runs to 31 residues: MSDINGTRLPWLATCPCVGEDVNPTLSRGER.

Positions 1–10 (MSDINGTRLP) are excised as a propeptide. Residues 11–16 (WLATCP) constitute a cross-link (cyclopeptide (Trp-Pro)). A propeptide spanning residues 17–31 (CVGEDVNPTLSRGER) is cleaved from the precursor.

The protein belongs to the MSDIN fungal toxin family. In terms of processing, processed by the macrocyclase-peptidase enzyme POPB to yield a toxic cyclic hexapeptide. POPB first removes 10 residues from the N-terminus. Conformational trapping of the remaining peptide forces the enzyme to release this intermediate rather than proceed to macrocyclization. The enzyme rebinds the remaining peptide in a different conformation and catalyzes macrocyclization of the N-terminal 6 residues.

Functionally, probable toxin that belongs to the MSDIN-like toxin family responsible for a large number of food poisoning cases and deaths. The chain is MSDIN-like toxin proprotein 4 from Amanita phalloides (Death cap).